The following is a 218-amino-acid chain: Pyridoxal 5'-phosphate synthase subunit PdxT (218 aa).

54-56 (GES) contacts L-glutamine. C86 (nucleophile) is an active-site residue. Residues R120 and 149–150 (IR) each bind L-glutamine. Catalysis depends on charge relay system residues H197 and E199.

Belongs to the glutaminase PdxT/SNO family. In terms of assembly, in the presence of PdxS, forms a dodecamer of heterodimers. Only shows activity in the heterodimer.

The enzyme catalyses aldehydo-D-ribose 5-phosphate + D-glyceraldehyde 3-phosphate + L-glutamine = pyridoxal 5'-phosphate + L-glutamate + phosphate + 3 H2O + H(+). It carries out the reaction L-glutamine + H2O = L-glutamate + NH4(+). The protein operates within cofactor biosynthesis; pyridoxal 5'-phosphate biosynthesis. In terms of biological role, catalyzes the hydrolysis of glutamine to glutamate and ammonia as part of the biosynthesis of pyridoxal 5'-phosphate. The resulting ammonia molecule is channeled to the active site of PdxS. The sequence is that of Pyridoxal 5'-phosphate synthase subunit PdxT from Saccharopolyspora erythraea (strain ATCC 11635 / DSM 40517 / JCM 4748 / NBRC 13426 / NCIMB 8594 / NRRL 2338).